The sequence spans 66 residues: Light-harvesting protein B-800-850 alpha chain B (66 aa).

Residues 1 to 11 lie on the Cytoplasmic side of the membrane; sequence MNQGRIWTVVN. Residues 12-35 form a helical membrane-spanning segment; that stretch reads PGVGLPLLLGSVTVIAILVHYAVL. Position 31 (histidine 31) interacts with a bacteriochlorophyll. The Periplasmic portion of the chain corresponds to 36 to 66; sequence SNTTWFPKYWNGATVAAPAAAPAPAAPAAKK.

The protein belongs to the antenna complex alpha subunit family. The core complex is formed by different alpha and beta chains, binding bacteriochlorophyll molecules, and arranged most probably in tetrameric structures disposed around the reaction center. The non-pigmented gamma chains may constitute additional components.

The protein resides in the cell inner membrane. Its function is as follows. Antenna complexes are light-harvesting systems, which transfer the excitation energy to the reaction centers. The sequence is that of Light-harvesting protein B-800-850 alpha chain B (pucAB) from Rhodopseudomonas palustris (strain ATCC BAA-98 / CGA009).